The following is a 166-amino-acid chain: Bacterial non-heme ferritin (166 aa).

The Ferritin-like diiron domain maps to 2–145; the sequence is LSKDLLEALN…THIDYLNRIG (144 aa). Residues Glu17, Glu50, His53, Glu94, and Gln127 each contribute to the Fe cation site.

This sequence belongs to the ferritin family. Prokaryotic subfamily.

The protein localises to the cytoplasm. The catalysed reaction is 4 Fe(2+) + O2 + 6 H2O = 4 iron(III) oxide-hydroxide + 12 H(+). In terms of biological role, iron-storage protein. The sequence is that of Bacterial non-heme ferritin (ftnA) from Staphylococcus haemolyticus (strain JCSC1435).